The primary structure comprises 152 residues: 3-hydroxyacyl-[acyl-carrier-protein] dehydratase FabZ (152 aa).

Histidine 57 is a catalytic residue.

This sequence belongs to the thioester dehydratase family. FabZ subfamily.

Its subcellular location is the cytoplasm. The enzyme catalyses a (3R)-hydroxyacyl-[ACP] = a (2E)-enoyl-[ACP] + H2O. Its function is as follows. Involved in unsaturated fatty acids biosynthesis. Catalyzes the dehydration of short chain beta-hydroxyacyl-ACPs and long chain saturated and unsaturated beta-hydroxyacyl-ACPs. This chain is 3-hydroxyacyl-[acyl-carrier-protein] dehydratase FabZ, found in Xanthomonas axonopodis pv. citri (strain 306).